The following is a 123-amino-acid chain: UPF0102 protein CLK_1817 (123 aa).

This sequence belongs to the UPF0102 family.

The polypeptide is UPF0102 protein CLK_1817 (Clostridium botulinum (strain Loch Maree / Type A3)).